A 413-amino-acid chain; its full sequence is 1-deoxy-D-xylulose 5-phosphate reductoisomerase (413 aa).

The NADPH site is built by threonine 13, glycine 14, serine 15, isoleucine 16, arginine 40, asparagine 41, and asparagine 127. Residue lysine 128 participates in 1-deoxy-D-xylulose 5-phosphate binding. Residue glutamate 129 coordinates NADPH. Aspartate 153 contributes to the Mn(2+) binding site. Residues serine 154, glutamate 155, serine 184, and histidine 207 each contribute to the 1-deoxy-D-xylulose 5-phosphate site. Residue glutamate 155 coordinates Mn(2+). Glycine 213 provides a ligand contact to NADPH. 1-deoxy-D-xylulose 5-phosphate is bound by residues serine 220, asparagine 225, lysine 226, and glutamate 229. Glutamate 229 lines the Mn(2+) pocket.

It belongs to the DXR family. Requires Mg(2+) as cofactor. Mn(2+) is required as a cofactor.

It catalyses the reaction 2-C-methyl-D-erythritol 4-phosphate + NADP(+) = 1-deoxy-D-xylulose 5-phosphate + NADPH + H(+). Its pathway is isoprenoid biosynthesis; isopentenyl diphosphate biosynthesis via DXP pathway; isopentenyl diphosphate from 1-deoxy-D-xylulose 5-phosphate: step 1/6. Functionally, catalyzes the NADPH-dependent rearrangement and reduction of 1-deoxy-D-xylulose-5-phosphate (DXP) to 2-C-methyl-D-erythritol 4-phosphate (MEP). The sequence is that of 1-deoxy-D-xylulose 5-phosphate reductoisomerase from Nitrosomonas europaea (strain ATCC 19718 / CIP 103999 / KCTC 2705 / NBRC 14298).